Here is a 189-residue protein sequence, read N- to C-terminus: Interferon alpha-14 (189 aa).

The signal sequence occupies residues 1–23 (MALPFALMMALVVLSCKSSCSLG). 2 disulfide bridges follow: cysteine 24–cysteine 122 and cysteine 52–cysteine 162. N-linked (GlcNAc...) asparagine glycosylation occurs at asparagine 95.

The protein belongs to the alpha/beta interferon family.

It localises to the secreted. Its function is as follows. Produced by macrophages, IFN-alpha have antiviral activities. Interferon stimulates the production of two enzymes: a protein kinase and an oligoadenylate synthetase. The sequence is that of Interferon alpha-14 (IFNA14) from Homo sapiens (Human).